Here is a 525-residue protein sequence, read N- to C-terminus: D-arabinono-1,4-lactone oxidase (525 aa).

The 176-residue stretch at 20–195 folds into the FAD-binding PCMH-type domain; sequence IYSSRPEWYF…VGATVRVVPA (176 aa). His-58 carries the post-translational modification Pros-8alpha-FAD histidine.

It belongs to the oxygen-dependent FAD-linked oxidoreductase family. The cofactor is FAD.

It localises to the mitochondrion membrane. The catalysed reaction is D-arabinono-1,4-lactone + O2 = dehydro-D-arabinono-1,4-lactone + H2O2 + H(+). It functions in the pathway cofactor biosynthesis; D-erythroascorbate biosynthesis; dehydro-D-arabinono-1,4-lactone from D-arabinose: step 2/2. The protein is D-arabinono-1,4-lactone oxidase (ALO1) of Candida glabrata (strain ATCC 2001 / BCRC 20586 / JCM 3761 / NBRC 0622 / NRRL Y-65 / CBS 138) (Yeast).